The chain runs to 536 residues: Phosphoenolpyruvate carboxykinase (ATP) (536 aa).

Residues arginine 61, tyrosine 195, and lysine 201 each contribute to the substrate site. ATP contacts are provided by residues lysine 201, histidine 220, and 236–244; that span reads GLSGTGKTT. 2 residues coordinate Mn(2+): lysine 201 and histidine 220. Aspartate 257 contributes to the Mn(2+) binding site. ATP is bound by residues glutamate 285, arginine 322, and threonine 447. Position 322 (arginine 322) interacts with substrate.

The protein belongs to the phosphoenolpyruvate carboxykinase (ATP) family. Mn(2+) is required as a cofactor.

The protein resides in the cytoplasm. It catalyses the reaction oxaloacetate + ATP = phosphoenolpyruvate + ADP + CO2. It functions in the pathway carbohydrate biosynthesis; gluconeogenesis. Its function is as follows. Involved in the gluconeogenesis. Catalyzes the conversion of oxaloacetate (OAA) to phosphoenolpyruvate (PEP) through direct phosphoryl transfer between the nucleoside triphosphate and OAA. This is Phosphoenolpyruvate carboxykinase (ATP) from Mesorhizobium japonicum (strain LMG 29417 / CECT 9101 / MAFF 303099) (Mesorhizobium loti (strain MAFF 303099)).